Consider the following 171-residue polypeptide: MWRRIVSSHLKSISAVGSCAAPSCRHAVVESTHLSLSTRASSIPAYSSIFSRLIGSAAADTAVKKRVEDVMPIATGHEKEELQAELEGRKLDDIDFPEGPFGTKEAPAVVKSYYDMRIVGCPGGEGEDEHDVVWFWLEKGKSFECPVCTQYFKLEVVGPGGPPDGHGDDHH.

The transit peptide at 1-54 (MWRRIVSSHLKSISAVGSCAAPSCRHAVVESTHLSLSTRASSIPAYSSIFSRLI) directs the protein to the mitochondrion. Cys-121, Cys-145, and Cys-148 together coordinate Zn(2+).

The protein belongs to the cytochrome c oxidase subunit 5B (TC 3.D.4.11) family.

The protein localises to the mitochondrion inner membrane. Its function is as follows. This protein is one of the nuclear-coded polypeptide chains of cytochrome c oxidase, the terminal oxidase in mitochondrial electron transport. The protein is Cytochrome c oxidase subunit 5b-2, mitochondrial (COX5B-2) of Arabidopsis thaliana (Mouse-ear cress).